Consider the following 556-residue polypeptide: Man(5)GlcNAc(2)-PP-dolichol translocation protein RFT1 (556 aa).

The next 12 helical transmembrane spans lie at 10–30 (LLGAGFSIIFQILCRILTFGI), 41–61 (EVLGIMNVRLLLLESTLLFLS), 91–111 (LTVPICAVLCAPCLYIWLNWL), 129–149 (VAFSCVLELMAESAVFVAQVF), 156–176 (ILLNTLHILVRSAIFLWIVTG), 184–204 (AFAIAQLSSAVTIVLGQYGFF), 353–373 (SVLNNLLLGVSSIGLIAFTFG), 389–409 (FVAGGLPQSLLQWHCLAIYLL), 440–460 (VSFLVLSYILTGIFGPVGFIF), 461–477 (ANCINMLSRILYSTYYI), 489–509 (LLGLWPGKLFGCTLFLAGIVC), and 517–537 (LATHLGVGVLAGLACLLSWAL).

This sequence belongs to the RFT1 family.

The protein resides in the endoplasmic reticulum membrane. The protein operates within protein modification; protein glycosylation. Intramembrane glycolipid transporter that operates in the biosynthetic pathway of dolichol-linked oligosaccharides, the glycan precursors employed in protein asparagine (N)-glycosylation. The sequential addition of sugars to dolichol pyrophosphate produces dolichol-linked oligosaccharides containing fourteen sugars, including two GlcNAcs, nine mannoses and three glucoses. Once assembled, the oligosaccharide is transferred from the lipid to nascent proteins by oligosaccharyltransferases. The assembly of dolichol-linked oligosaccharides begins on the cytosolic side of the endoplasmic reticulum membrane and finishes in its lumen. RFT1 could mediate the translocation of the cytosolically oriented intermediate DolPP-GlcNAc2Man5, produced by ALG11, into the ER lumen where dolichol-linked oligosaccharides assembly continues. However, the intramembrane lipid transporter activity could not be confirmed in vitro. The polypeptide is Man(5)GlcNAc(2)-PP-dolichol translocation protein RFT1 (Drosophila melanogaster (Fruit fly)).